We begin with the raw amino-acid sequence, 189 residues long: UPF0301 protein RP032 (189 aa).

It belongs to the UPF0301 (AlgH) family.

The polypeptide is UPF0301 protein RP032 (Rickettsia prowazekii (strain Madrid E)).